Here is a 501-residue protein sequence, read N- to C-terminus: Aspartate--tRNA ligase, cytoplasmic (501 aa).

Residue Thr-52 is modified to Phosphothreonine. Lys-74 carries the post-translational modification N6-acetyllysine. L-aspartate is bound at residue Glu-229. At Ser-249 the chain carries Phosphoserine. The interval 251-254 (QLYK) is aspartate. L-aspartate is bound at residue Arg-273. Residues 273 to 275 (RAE) and 281 to 283 (RHL) contribute to the ATP site. Lys-374 bears the N6-acetyllysine mark. Residues 411 to 415 (KQSNS) are binding site for the 3'-end of tRNA. ATP is bound at residue Glu-424. Positions 427 and 431 each coordinate L-aspartate. 472 to 475 (GLER) provides a ligand contact to ATP. Thr-500 carries the phosphothreonine; by PKA modification.

Belongs to the class-II aminoacyl-tRNA synthetase family. Type 2 subfamily. In terms of assembly, homodimer. Part of a multisubunit complex that groups tRNA ligases for Arg (RARS1), Asp (DARS1), Gln (QARS1), Ile (IARS1), Leu (LARS1), Lys (KARS1), Met (MARS1) the bifunctional ligase for Glu and Pro (EPRS1) and the auxiliary subunits AIMP1/p43, AIMP2/p38 and EEF1E1/p18. As to expression, expression in the developing and adult brain shows similar patterns. Highly expressed in the ventricular and subventricular zones, including hippocampal subfields, the midlateral temporal cortex and the frontal polar cortex. The cerebellum, cerebral cortex, hippocampus, and lateral ventricle show preferential neuronal expression. Expression in the peripheral neurons is evident in the colon.

It localises to the cytoplasm. Its subcellular location is the cytosol. The enzyme catalyses tRNA(Asp) + L-aspartate + ATP = L-aspartyl-tRNA(Asp) + AMP + diphosphate. Its function is as follows. Catalyzes the specific attachment of an amino acid to its cognate tRNA in a 2 step reaction: the amino acid (AA) is first activated by ATP to form AA-AMP and then transferred to the acceptor end of the tRNA. The chain is Aspartate--tRNA ligase, cytoplasmic from Homo sapiens (Human).